The chain runs to 299 residues: Meso-diaminopimelate D-dehydrogenase (299 aa).

NADP(+)-binding positions include 11 to 14 (YGNI), arginine 36, 67 to 70 (CTPT), 90 to 92 (SFD), and 119 to 123 (AGWDP). Substrate-binding positions include aspartate 92, aspartate 122, phenylalanine 146, 152-153 (MG), threonine 171, arginine 181, histidine 227, and asparagine 253.

This sequence belongs to the diaminopimelate dehydrogenase family. As to quaternary structure, homodimer.

The catalysed reaction is meso-2,6-diaminopimelate + NADP(+) + H2O = (S)-2-amino-6-oxoheptanedioate + NH4(+) + NADPH + H(+). Its pathway is amino-acid biosynthesis; L-lysine biosynthesis via DAP pathway; DL-2,6-diaminopimelate from (S)-tetrahydrodipicolinate: step 1/1. Its function is as follows. Catalyzes the reversible NADPH-dependent reductive amination of L-2-amino-6-oxopimelate, the acyclic form of L-tetrahydrodipicolinate, to generate the meso compound, D,L-2,6-diaminopimelate. Probably plays a role in lysine biosynthesis. Exhibits a high substrate specificity for meso-2,6-diaminopimelate (m-DAP), since the activity with L,L-2,6-diaminopimelate is less than 5% of the activity observed with m-DAP. Can use NAD(+) only very poorly since the activity observed in the presence of NAD(+) is about 14% of that with NADP(+). The protein is Meso-diaminopimelate D-dehydrogenase (ddh) of Bacteroides fragilis (strain ATCC 25285 / DSM 2151 / CCUG 4856 / JCM 11019 / LMG 10263 / NCTC 9343 / Onslow / VPI 2553 / EN-2).